The chain runs to 163 residues: Nucleotide-binding protein HAPS_2236 (163 aa).

It belongs to the YajQ family.

Nucleotide-binding protein. This Glaesserella parasuis serovar 5 (strain SH0165) (Haemophilus parasuis) protein is Nucleotide-binding protein HAPS_2236.